A 170-amino-acid polypeptide reads, in one-letter code: RNA pyrophosphohydrolase (170 aa).

The region spanning 6–149 (GFRPNVGIVI…KRDVYRRALK (144 aa)) is the Nudix hydrolase domain. Positions 38-59 (GGIDDGETPEQAMYRELYEEVG) match the Nudix box motif.

It belongs to the Nudix hydrolase family. RppH subfamily. A divalent metal cation is required as a cofactor.

Functionally, accelerates the degradation of transcripts by removing pyrophosphate from the 5'-end of triphosphorylated RNA, leading to a more labile monophosphorylated state that can stimulate subsequent ribonuclease cleavage. In Aliivibrio fischeri (strain ATCC 700601 / ES114) (Vibrio fischeri), this protein is RNA pyrophosphohydrolase.